The following is a 391-amino-acid chain: 3-ketoacyl-CoA thiolase (391 aa).

The active-site Acyl-thioester intermediate is cysteine 95. Active-site proton acceptor residues include histidine 347 and cysteine 377.

This sequence belongs to the thiolase-like superfamily. Thiolase family. As to quaternary structure, heterotetramer of two alpha chains (FadB) and two beta chains (FadA).

It localises to the cytoplasm. It catalyses the reaction an acyl-CoA + acetyl-CoA = a 3-oxoacyl-CoA + CoA. Its pathway is lipid metabolism; fatty acid beta-oxidation. In terms of biological role, catalyzes the final step of fatty acid oxidation in which acetyl-CoA is released and the CoA ester of a fatty acid two carbons shorter is formed. This is 3-ketoacyl-CoA thiolase from Ectopseudomonas mendocina (strain ymp) (Pseudomonas mendocina).